Here is a 680-residue protein sequence, read N- to C-terminus: NADPH--cytochrome P450 reductase (680 aa).

Topologically, residues 1–5 (MALDK) are lumenal. The chain crosses the membrane as a helical span at residues 6–23 (LDLYVIITLVVAIAAYFA). Over 24–680 (KNQFLDQQQD…VQNRYQEDVW (657 aa)) the chain is Cytoplasmic. Positions 60–204 (TLLLFGSQTG…DFLAWKDNVF (145 aa)) constitute a Flavodoxin-like domain. Residues 66–71 (SQTGTA), 117–120 (ATYG), 152–161 (LGNSTYEFFN), and D187 each bind FMN. One can recognise an FAD-binding FR-type domain in the interval 264-509 (THPFLARIVK…NGPRGKFSKF (246 aa)). Residue R283 coordinates NADP(+). FAD is bound by residues 439-442 (RYYS), 457-459 (TAV), and 473-476 (GVVT). NADP(+) contacts are provided by residues T537, 599-600 (SR), 606-610 (KVYVQ), and D642. W680 provides a ligand contact to FAD.

It belongs to the NADPH--cytochrome P450 reductase family. In the N-terminal section; belongs to the flavodoxin family. This sequence in the C-terminal section; belongs to the flavoprotein pyridine nucleotide cytochrome reductase family. Requires FAD as cofactor. FMN serves as cofactor.

The protein resides in the endoplasmic reticulum membrane. It localises to the mitochondrion outer membrane. It is found in the cell membrane. The catalysed reaction is 2 oxidized [cytochrome P450] + NADPH = 2 reduced [cytochrome P450] + NADP(+) + H(+). Functionally, this enzyme is required for electron transfer from NADP to cytochrome P450 in microsomes. It can also provide electron transfer to heme oxygenase and cytochrome B5. Involved in ergosterol biosynthesis. This Candida tropicalis (Yeast) protein is NADPH--cytochrome P450 reductase.